A 339-amino-acid chain; its full sequence is Centromere protein N (339 aa).

Ser226 and Ser235 each carry phosphoserine.

Belongs to the CENP-N/CHL4 family. In terms of assembly, component of the CENPA-NAC complex, at least composed of CENPA, CENPC, CENPH, CENPM, CENPN, CENPT and CENPU. The CENPA-NAC complex interacts with the CENPA-CAD complex, composed of CENPI, CENPK, CENPL, CENPO, CENPP, CENPQ, CENPR and CENPS. Interacts directly with CENPA. Identified in a centromere complex containing histones H2A, H2B and H4, and at least CENPA, CENPB, CENPC, CENPT, CENPN, HJURP, SUPT16H, SSRP1 and RSF1.

The protein resides in the nucleus. The protein localises to the chromosome. It localises to the centromere. Its subcellular location is the kinetochore. In terms of biological role, component of the CENPA-NAC (nucleosome-associated) complex, a complex that plays a central role in assembly of kinetochore proteins, mitotic progression and chromosome segregation. The CENPA-NAC complex recruits the CENPA-CAD (nucleosome distal) complex and may be involved in incorporation of newly synthesized CENPA into centromeres. CENPN is the first protein to bind specifically to CENPA nucleosomes and the direct binding of CENPA nucleosomes by CENPN is required for centromere assembly. Required for chromosome congression and efficiently align the chromosomes on a metaphase plate. This Bos taurus (Bovine) protein is Centromere protein N (CENPN).